An 838-amino-acid chain; its full sequence is Sec1 family domain-containing protein MIP3 (838 aa).

Positions lysine 637–aspartate 677 are disordered. Residues serine 646–aspartate 658 are compositionally biased toward acidic residues.

This sequence belongs to the STXBP/unc-18/SEC1 family. Forms a complex with MAG2, ZW10/MIP1 and MIP2 on the endoplasmic reticulum.

It localises to the endoplasmic reticulum membrane. Required for proper maturation of seed storage proteins. Forms a complex with MAG2, ZW10/MIP1 and MIP2 on the endoplasmic reticulum that may be responsible for efficient transport of seed storage proteins. The polypeptide is Sec1 family domain-containing protein MIP3 (Arabidopsis thaliana (Mouse-ear cress)).